Consider the following 690-residue polypeptide: Protein arginine N-methyltransferase 7 (690 aa).

SAM-dependent MTase PRMT-type domains lie at 14 to 357 (QNSW…YSLW) and 366 to 690 (TKSV…QKKL).

This sequence belongs to the class I-like SAM-binding methyltransferase superfamily. Protein arginine N-methyltransferase family. PRMT7 subfamily. As to expression, expressed at low level in ovary.

Functionally, essential arginine methyltransferase that can both catalyze the formation of omega-N monomethylarginine (MMA) and symmetrical dimethylarginine (sDMA). Specifically mediates the symmetrical dimethylation of arginine residues in the small nuclear ribonucleoproteins SmD1 and SmD3. This is Protein arginine N-methyltransferase 7 (Art7) from Drosophila melanogaster (Fruit fly).